The following is a 154-amino-acid chain: MRSPCPCNSGKLYADCCAPFISKDALPATPEQLMRSRYSAFVIQDGDYLIATWHPQAVAEAWRDEITAGFRTTRWRDLAVQECAAGQDSDSGYVTFLALFYDERQRRNGFIHERSRFVRLNERWYYVDGRHIVPGRNAPCPCGSGLKYKKCCEQ.

This sequence belongs to the UPF0225 family.

This is UPF0225 protein SG1365 from Sodalis glossinidius (strain morsitans).